Here is a 495-residue protein sequence, read N- to C-terminus: UDP-N-acetylmuramate--L-alanine ligase (495 aa).

153 to 159 contributes to the ATP binding site; it reads GTHGKTT.

This sequence belongs to the MurCDEF family.

It is found in the cytoplasm. The enzyme catalyses UDP-N-acetyl-alpha-D-muramate + L-alanine + ATP = UDP-N-acetyl-alpha-D-muramoyl-L-alanine + ADP + phosphate + H(+). The protein operates within cell wall biogenesis; peptidoglycan biosynthesis. Functionally, cell wall formation. The chain is UDP-N-acetylmuramate--L-alanine ligase from Gloeothece citriformis (strain PCC 7424) (Cyanothece sp. (strain PCC 7424)).